A 177-amino-acid polypeptide reads, in one-letter code: Ribonuclease M5 (177 aa).

One can recognise a Toprim domain in the interval 5 to 99; sequence KQIIIVEGKT…NKTSKKIGIA (95 aa). 3 residues coordinate Mg(2+): E11, D59, and D61.

It belongs to the ribonuclease M5 family. Mg(2+) is required as a cofactor.

Its subcellular location is the cytoplasm. The enzyme catalyses Endonucleolytic cleavage of RNA, removing 21 and 42 nucleotides, respectively, from the 5'- and 3'-termini of a 5S-rRNA precursor.. Its function is as follows. Required for correct processing of both the 5' and 3' ends of 5S rRNA precursor. Cleaves both sides of a double-stranded region yielding mature 5S rRNA in one step. The chain is Ribonuclease M5 from Mycoplasma mycoides subsp. mycoides SC (strain CCUG 32753 / NCTC 10114 / PG1).